We begin with the raw amino-acid sequence, 102 residues long: Large ribosomal subunit protein bL21 (102 aa).

It belongs to the bacterial ribosomal protein bL21 family. As to quaternary structure, part of the 50S ribosomal subunit. Contacts protein L20.

Its function is as follows. This protein binds to 23S rRNA in the presence of protein L20. The sequence is that of Large ribosomal subunit protein bL21 from Bacillus velezensis (strain DSM 23117 / BGSC 10A6 / LMG 26770 / FZB42) (Bacillus amyloliquefaciens subsp. plantarum).